The following is a 256-amino-acid chain: Non-specific lipid transfer protein GPI-anchored 23 (256 aa).

The first 21 residues, Met-1–Ala-21, serve as a signal peptide directing secretion. N-linked (GlcNAc...) asparagine glycosylation is present at Asn-41. 4 disulfides stabilise this stretch: Cys-45–Cys-88, Cys-55–Cys-72, Cys-73–Cys-113, and Cys-86–Cys-121. The disordered stretch occupies residues Thr-125–Ile-230. Residues Ser-138–Ile-230 are compositionally biased toward low complexity. Ser-225 carries the GPI-anchor amidated serine lipid modification. A propeptide spans Pro-226–Ala-256 (removed in mature form).

This sequence belongs to the plant LTP family. Confined to the anthers of the inflorescence.

The protein resides in the cell membrane. Functionally, probable lipid transfer protein. This is Non-specific lipid transfer protein GPI-anchored 23 from Arabidopsis thaliana (Mouse-ear cress).